We begin with the raw amino-acid sequence, 66 residues long: Large ribosomal subunit protein bL31 (66 aa).

Zn(2+) contacts are provided by C16, C18, C36, and C39.

Belongs to the bacterial ribosomal protein bL31 family. Type A subfamily. In terms of assembly, part of the 50S ribosomal subunit. Zn(2+) serves as cofactor.

In terms of biological role, binds the 23S rRNA. The protein is Large ribosomal subunit protein bL31 of Priestia megaterium (Bacillus megaterium).